A 70-amino-acid chain; its full sequence is DNA gyrase inhibitor YacG (70 aa).

Basic and acidic residues predominate over residues 1 to 15 (MPEDKKAAAKVEPLR). Residues 1-22 (MPEDKKAAAKVEPLRKTRPCPE) form a disordered region. Zn(2+)-binding residues include C20, C23, C35, and C39.

This sequence belongs to the DNA gyrase inhibitor YacG family. Interacts with GyrB. The cofactor is Zn(2+).

Inhibits all the catalytic activities of DNA gyrase by preventing its interaction with DNA. Acts by binding directly to the C-terminal domain of GyrB, which probably disrupts DNA binding by the gyrase. This Rhizobium johnstonii (strain DSM 114642 / LMG 32736 / 3841) (Rhizobium leguminosarum bv. viciae) protein is DNA gyrase inhibitor YacG.